A 132-amino-acid polypeptide reads, in one-letter code: Small ribosomal subunit protein uS8 (132 aa).

Belongs to the universal ribosomal protein uS8 family. Part of the 30S ribosomal subunit. Contacts proteins S5 and S12.

In terms of biological role, one of the primary rRNA binding proteins, it binds directly to 16S rRNA central domain where it helps coordinate assembly of the platform of the 30S subunit. The chain is Small ribosomal subunit protein uS8 from Anoxybacillus flavithermus (strain DSM 21510 / WK1).